Here is a 1074-residue protein sequence, read N- to C-terminus: DNA-directed RNA polymerase subunit beta (1074 aa).

This sequence belongs to the RNA polymerase beta chain family. As to quaternary structure, in plastids the minimal PEP RNA polymerase catalytic core is composed of four subunits: alpha, beta, beta', and beta''. When a (nuclear-encoded) sigma factor is associated with the core the holoenzyme is formed, which can initiate transcription.

Its subcellular location is the plastid. The protein localises to the chloroplast. The enzyme catalyses RNA(n) + a ribonucleoside 5'-triphosphate = RNA(n+1) + diphosphate. Its function is as follows. DNA-dependent RNA polymerase catalyzes the transcription of DNA into RNA using the four ribonucleoside triphosphates as substrates. The polypeptide is DNA-directed RNA polymerase subunit beta (Chara vulgaris (Common stonewort)).